We begin with the raw amino-acid sequence, 251 residues long: MNVADLLSHLETLLSSKIFQDYGPNGLQVGDPQTPVKKIAVAVTADLETIKQAVAAEANVLIVHHGIFWKGMPYPITGMIHKRIQLLIEHNIQLIAYHLPLDAHPTLGNNWRVALDLNWHDLKPFGSSLPYLGVQGSFSPIDIDSFIDLLSQYYQAPLKGSALGGPSRVSSAALISGGAYRELSSAATSQVDCFITGNFDEPAWSTALESNINFLAFGHTATEKVGPKSLAEHLKSEFPISTTFIDTANPF.

A divalent metal cation-binding residues include His64, His65, Asp102, His219, and Glu223.

Belongs to the GTP cyclohydrolase I type 2/NIF3 family. In terms of assembly, homohexamer.

The polypeptide is GTP cyclohydrolase 1 type 2 homolog (Chlamydia pneumoniae (Chlamydophila pneumoniae)).